Consider the following 59-residue polypeptide: Large ribosomal subunit protein uL30 (59 aa).

This sequence belongs to the universal ribosomal protein uL30 family. In terms of assembly, part of the 50S ribosomal subunit.

The protein is Large ribosomal subunit protein uL30 of Syntrophotalea carbinolica (strain DSM 2380 / NBRC 103641 / GraBd1) (Pelobacter carbinolicus).